Reading from the N-terminus, the 229-residue chain is Complex I assembly factor TMEM126B, mitochondrial (229 aa).

4 helical membrane passes run 71–91 (IRGT…ANLV), 109–129 (LTTL…TDAL), 140–160 (VLRS…ALAF), and 198–218 (VPLL…YAVC).

In terms of assembly, part of the mitochondrial complex I assembly/MCIA complex that comprises at least the core subunits TMEM126B, NDUFAF1, ECSIT and ACAD9 and complement subunits such as COA1 and TMEM186. Associates with the intermediate 370 kDa subcomplex of incompletely assembled complex I. Interacts with TMEM70.

The protein resides in the mitochondrion membrane. In terms of biological role, as part of the MCIA complex, involved in the assembly of the mitochondrial complex I. Participates in constructing the membrane arm of complex I. The chain is Complex I assembly factor TMEM126B, mitochondrial from Rattus norvegicus (Rat).